Consider the following 394-residue polypeptide: MSRNTPHIFTSESVGEGHPDKVADYISDSILDACLAQDKTSRVACETLVKSNMVIIAGELTTKAVIDPEKIARQAIREIGYCNRQDDDVFHADTVFFTNLLTEQSPDIAQGVDAREAEGKGHAEQGAGDQGIMFGFATNETPELLPAPIVFAHKLLIELARRRKRGHVDWLRPDCKSQVAVAYDEDGRPAHIENVVISTQHTEDVDHDTIYSYCVKLIKNVLPAELLDERTEYFINPTGKFVVGGPHGDSGLTGRKIIVDTYGGMGRHGGGAFSGKDPSKVDRSAAYMCRWVAKHIVAAGLADKCELQVAYAIGYPAPVSIRVDTFGTGKVEEISIENALENIFSFKPADMVEQLNLLRPIYRKTTHYGHFTNPELPWEQLDETRLASLKQLLH.

Histidine 18 provides a ligand contact to ATP. Residue aspartate 20 participates in Mg(2+) binding. A K(+)-binding site is contributed by glutamate 46. L-methionine is bound by residues glutamate 59 and glutamine 104. A flexible loop region spans residues 104–114 (QSPDIAQGVDA). Residues 174–176 (DCK), 240–241 (KF), aspartate 249, 255–256 (RK), alanine 272, and lysine 276 contribute to the ATP site. Aspartate 249 is a binding site for L-methionine. Lysine 280 serves as a coordination point for L-methionine.

The protein belongs to the AdoMet synthase family. Homotetramer; dimer of dimers. Mg(2+) serves as cofactor. The cofactor is K(+).

The protein localises to the cytoplasm. The enzyme catalyses L-methionine + ATP + H2O = S-adenosyl-L-methionine + phosphate + diphosphate. The protein operates within amino-acid biosynthesis; S-adenosyl-L-methionine biosynthesis; S-adenosyl-L-methionine from L-methionine: step 1/1. Functionally, catalyzes the formation of S-adenosylmethionine (AdoMet) from methionine and ATP. The overall synthetic reaction is composed of two sequential steps, AdoMet formation and the subsequent tripolyphosphate hydrolysis which occurs prior to release of AdoMet from the enzyme. This Akkermansia muciniphila (strain ATCC BAA-835 / DSM 22959 / JCM 33894 / BCRC 81048 / CCUG 64013 / CIP 107961 / Muc) protein is S-adenosylmethionine synthase.